A 391-amino-acid polypeptide reads, in one-letter code: Protein CapJ (391 aa).

It participates in capsule biogenesis; capsule polysaccharide biosynthesis. Required for the biosynthesis of type 1 capsular polysaccharide. The polypeptide is Protein CapJ (capJ) (Staphylococcus aureus).